The sequence spans 176 residues: Ribosome maturation factor RimM (176 aa).

Positions 96-176 (PEDEFYWRDL…QILVDWDPDF (81 aa)) constitute a PRC barrel domain.

It belongs to the RimM family. As to quaternary structure, binds ribosomal protein uS19.

The protein localises to the cytoplasm. In terms of biological role, an accessory protein needed during the final step in the assembly of 30S ribosomal subunit, possibly for assembly of the head region. Essential for efficient processing of 16S rRNA. May be needed both before and after RbfA during the maturation of 16S rRNA. It has affinity for free ribosomal 30S subunits but not for 70S ribosomes. The polypeptide is Ribosome maturation factor RimM (Shewanella woodyi (strain ATCC 51908 / MS32)).